The primary structure comprises 343 residues: UDP-3-O-acylglucosamine N-acyltransferase (343 aa).

Catalysis depends on histidine 239, which acts as the Proton acceptor.

Belongs to the transferase hexapeptide repeat family. LpxD subfamily. As to quaternary structure, homotrimer.

It catalyses the reaction a UDP-3-O-[(3R)-3-hydroxyacyl]-alpha-D-glucosamine + a (3R)-hydroxyacyl-[ACP] = a UDP-2-N,3-O-bis[(3R)-3-hydroxyacyl]-alpha-D-glucosamine + holo-[ACP] + H(+). It participates in bacterial outer membrane biogenesis; LPS lipid A biosynthesis. Functionally, catalyzes the N-acylation of UDP-3-O-acylglucosamine using 3-hydroxyacyl-ACP as the acyl donor. Is involved in the biosynthesis of lipid A, a phosphorylated glycolipid that anchors the lipopolysaccharide to the outer membrane of the cell. This is UDP-3-O-acylglucosamine N-acyltransferase from Vibrio vulnificus (strain YJ016).